Consider the following 77-residue polypeptide: Defensin-like protein 1 (77 aa).

Positions Met1–Ala30 are cleaved as a signal peptide. Intrachain disulfides connect Cys33-Cys77, Cys44-Cys64, Cys50-Cys71, and Cys54-Cys73.

This sequence belongs to the DEFL family. Expressed in the whole plant except roots.

It localises to the secreted. Functionally, confers broad-spectrum resistance to pathogens. The chain is Defensin-like protein 1 (PDF2.3) from Arabidopsis thaliana (Mouse-ear cress).